The chain runs to 419 residues: UDP-N-acetylglucosamine 1-carboxyvinyltransferase (419 aa).

Position 22–23 (22–23) interacts with phosphoenolpyruvate; that stretch reads KN. Residue Arg92 coordinates UDP-N-acetyl-alpha-D-glucosamine. The active-site Proton donor is Cys116. A 2-(S-cysteinyl)pyruvic acid O-phosphothioketal modification is found at Cys116. UDP-N-acetyl-alpha-D-glucosamine-binding positions include 121-125, Asp305, and Ile327; that span reads RPIDQ.

Belongs to the EPSP synthase family. MurA subfamily.

The protein resides in the cytoplasm. It carries out the reaction phosphoenolpyruvate + UDP-N-acetyl-alpha-D-glucosamine = UDP-N-acetyl-3-O-(1-carboxyvinyl)-alpha-D-glucosamine + phosphate. The protein operates within cell wall biogenesis; peptidoglycan biosynthesis. In terms of biological role, cell wall formation. Adds enolpyruvyl to UDP-N-acetylglucosamine. This is UDP-N-acetylglucosamine 1-carboxyvinyltransferase from Trichlorobacter lovleyi (strain ATCC BAA-1151 / DSM 17278 / SZ) (Geobacter lovleyi).